The primary structure comprises 808 residues: Zinc finger protein 841 (808 aa).

A Glycyl lysine isopeptide (Lys-Gly) (interchain with G-Cter in SUMO2) cross-link involves residue lysine 137. A C2H2-type 1; degenerate zinc finger spans residues 145–167; sequence YIGNECGKAFRVSSSLINHQMIH. Residues 173–195 form a C2H2-type 2; degenerate zinc finger; that stretch reads YRCNESGKAFHRGSLLTVHQIVH. C2H2-type zinc fingers lie at residues 201–223, 229–251, 257–279, 285–307, 313–335, 341–363, 369–391, 397–419, 425–447, 453–475, 481–503, 509–531, and 537–559; these read YQCDVCGRIFRQNSDLVNHRRSH, YICNECGKSFSKSSHLAVHQRIH, YKCNRCGKCFSQSSSLATHQTVH, YKCNECGKTFKRNSSLTAHHIIH, YTCDVCGKVFYQNSQLVRHQIIH, YKCNECGKVFFQRSRLAGHRRIH, YKCNECGKVFSQHSHLAVHQRVH, YKCNECGKAFNWGSLLTVHQRIH, YKCNVCGKVFNYGGYLSVHMRCH, LHCNKCGMVFTYYSCLARHQRMH, YKCNVCGKVFIDSGNLSIHRRSH, FQCNECGKVFSYYSCLARHRKIH, and YKCNDCGKAYTQRSSLTKHLVIH. Glycyl lysine isopeptide (Lys-Gly) (interchain with G-Cter in SUMO2) cross-links involve residues lysine 554 and lysine 579. The C2H2-type 16; degenerate zinc-finger motif lies at 565-587; the sequence is YHCNEFGEAFIQSSKLARYHRNP. C2H2-type zinc fingers lie at residues 593–615, 621–643, 649–671, 677–699, 705–727, 733–755, and 761–783; these read HKCSECGRTFSHKTSLVYHQRRH, YKCIECGKVFNSTTTLARHRRIH, YKCNECGKVFRYRSGLARHWSIH, YKCNECGKAFRVRSILLNHQMMH, YKCNECGKAFIERSNLVYHQRNH, YKCMECGKAFGRRSCLTKHQRIH, and YKCNECGKSYISRSGLTKHQIKH. A Glycyl lysine isopeptide (Lys-Gly) (interchain with G-Cter in SUMO2) cross-link involves residue lysine 791.

Belongs to the krueppel C2H2-type zinc-finger protein family.

It is found in the nucleus. Functionally, may be involved in transcriptional regulation. The polypeptide is Zinc finger protein 841 (ZNF841) (Homo sapiens (Human)).